The sequence spans 211 residues: C-type lectin domain family 2 member L (211 aa).

The tract at residues 1–53 is disordered; that stretch reads MEPAREPPARARPPPPAARPAPAAPRPRSPAEAEARGPEGLLRRSGSGYEGST. Residues 10 to 28 show a composition bias toward pro residues; sequence RARPPPPAARPAPAAPRPR. Ser29 carries the post-translational modification Phosphoserine. A helical transmembrane segment spans residues 66-86; the sequence is LLLGAIAVLLFAILVVMSILA. The C-type lectin domain occupies 104-206; sequence YGRKCYYFSE…CLTTRPWVCS (103 aa). Cystine bridges form between Cys125/Cys205 and Cys184/Cys197.

It localises to the membrane. This Mus musculus (Mouse) protein is C-type lectin domain family 2 member L (Clec2l).